Consider the following 607-residue polypeptide: Glutamine--fructose-6-phosphate aminotransferase [isomerizing] (607 aa).

Catalysis depends on Cys-2, which acts as the Nucleophile; for GATase activity. Residues 2 to 217 (CGIIGILGKR…DGDWAVLTRE (216 aa)) form the Glutamine amidotransferase type-2 domain. SIS domains lie at 277 to 422 (TVRS…QRGF) and 455 to 597 (ICRN…VDQP). Residue Lys-602 is the For Fru-6P isomerization activity of the active site.

In terms of assembly, homodimer.

The protein resides in the cytoplasm. It catalyses the reaction D-fructose 6-phosphate + L-glutamine = D-glucosamine 6-phosphate + L-glutamate. Functionally, catalyzes the first step in hexosamine metabolism, converting fructose-6P into glucosamine-6P using glutamine as a nitrogen source. The chain is Glutamine--fructose-6-phosphate aminotransferase [isomerizing] from Bartonella henselae (strain ATCC 49882 / DSM 28221 / CCUG 30454 / Houston 1) (Rochalimaea henselae).